A 217-amino-acid chain; its full sequence is MTLFEKLRCLFTFGQGVALPLPELSSNTTPDQIFEQWFADANKSGILLPEAMSVSSCNSDGQPSSRMVLLKDYDKEGFVFFTNYESRKSHELAENNKVALLFHWNVLQRQIRIEGTVEKVSIQESADYFHSRDRGSQVGAWASKQSQKLKYDDELKERMSHYQDKFSEGEVPHPEFWGGWRVKPHAIEFWQGRANRLHDRLCFEKDGETWLNHKLNP.

FMN-binding positions include Arg66–Lys71, Phe81–Thr82, Arg87, Lys88, and Gln110. Lys71 is a binding site for substrate. Tyr128, Arg132, and Ser136 together coordinate substrate. Residues Gln145–Ser146 and Trp190 contribute to the FMN site. Arg196 to His198 is a binding site for substrate. Arg200 contributes to the FMN binding site.

It belongs to the pyridoxamine 5'-phosphate oxidase family. In terms of assembly, homodimer. FMN is required as a cofactor.

It carries out the reaction pyridoxamine 5'-phosphate + O2 + H2O = pyridoxal 5'-phosphate + H2O2 + NH4(+). It catalyses the reaction pyridoxine 5'-phosphate + O2 = pyridoxal 5'-phosphate + H2O2. Its pathway is cofactor metabolism; pyridoxal 5'-phosphate salvage; pyridoxal 5'-phosphate from pyridoxamine 5'-phosphate: step 1/1. It functions in the pathway cofactor metabolism; pyridoxal 5'-phosphate salvage; pyridoxal 5'-phosphate from pyridoxine 5'-phosphate: step 1/1. Its function is as follows. Catalyzes the oxidation of either pyridoxine 5'-phosphate (PNP) or pyridoxamine 5'-phosphate (PMP) into pyridoxal 5'-phosphate (PLP). The protein is Pyridoxine/pyridoxamine 5'-phosphate oxidase of Colwellia psychrerythraea (strain 34H / ATCC BAA-681) (Vibrio psychroerythus).